The primary structure comprises 887 residues: Beta-galactosidase 9 (887 aa).

The N-terminal stretch at 1 to 30 is a signal peptide; it reads MAESIRTFSLQWRILSLIIALLVYFPILSG. The N-linked (GlcNAc...) asparagine glycan is linked to asparagine 37. Glutamate 194 functions as the Proton donor in the catalytic mechanism. The Nucleophile role is filled by glutamate 263. Residues asparagine 463, asparagine 485, asparagine 496, asparagine 527, and asparagine 785 are each glycosylated (N-linked (GlcNAc...) asparagine). Residues 791 to 877 form the SUEL-type lectin domain; it reads NSVAPEVHLH…KTLAVMSRCS (87 aa). A glycan (N-linked (GlcNAc...) asparagine) is linked at asparagine 881.

This sequence belongs to the glycosyl hydrolase 35 family. Ubiquitous, with higher expression levels in siliques.

It is found in the secreted. Its subcellular location is the extracellular space. It localises to the apoplast. The catalysed reaction is Hydrolysis of terminal non-reducing beta-D-galactose residues in beta-D-galactosides.. This is Beta-galactosidase 9 (BGAL9) from Arabidopsis thaliana (Mouse-ear cress).